The following is a 73-amino-acid chain: Large ribosomal subunit protein eL20 (73 aa).

It belongs to the eukaryotic ribosomal protein eL20 family. Part of the 50S ribosomal subunit. Binds 23S rRNA.

The protein is Large ribosomal subunit protein eL20 of Methanococcus aeolicus (strain ATCC BAA-1280 / DSM 17508 / OCM 812 / Nankai-3).